The primary structure comprises 191 residues: Thymidine kinase (191 aa).

ATP-binding positions include 9–16 and 85–88; these read GSMNSGKT and DESQ. Glu86 functions as the Proton acceptor in the catalytic mechanism. Zn(2+) contacts are provided by Cys143, Cys146, Cys181, and Cys184.

The protein belongs to the thymidine kinase family. Homotetramer.

It localises to the cytoplasm. The catalysed reaction is thymidine + ATP = dTMP + ADP + H(+). In Listeria monocytogenes serovar 1/2a (strain ATCC BAA-679 / EGD-e), this protein is Thymidine kinase.